The primary structure comprises 1016 residues: S-layer protein A (1016 aa).

The signal sequence occupies residues 1-30 (MDLSTKKVISAGLVFIYALSLAMLVPMFLA).

This sequence belongs to the Sulfolobales SlaA family. As to quaternary structure, the mushroom-shaped unit cells of the Sulfolobales' S-layers may consist of three SlaB subunits and six SlaA subunits.

The protein resides in the secreted. It localises to the cell wall. Its subcellular location is the S-layer. In terms of biological role, S-layer large protein. May form the highly ordered outer sheath. The polypeptide is S-layer protein A (Acidianus ambivalens (Desulfurolobus ambivalens)).